A 130-amino-acid chain; its full sequence is Large ribosomal subunit protein bL12 (130 aa).

The protein belongs to the bacterial ribosomal protein bL12 family. Homodimer. Part of the ribosomal stalk of the 50S ribosomal subunit. Forms a multimeric L10(L12)X complex, where L10 forms an elongated spine to which 2 to 4 L12 dimers bind in a sequential fashion. Binds GTP-bound translation factors.

Its function is as follows. Forms part of the ribosomal stalk which helps the ribosome interact with GTP-bound translation factors. Is thus essential for accurate translation. The polypeptide is Large ribosomal subunit protein bL12 (Mycolicibacterium gilvum (strain PYR-GCK) (Mycobacterium gilvum (strain PYR-GCK))).